The sequence spans 443 residues: Glutamate-1-semialdehyde 2,1-aminomutase (443 aa).

Residues 1 to 16 are compositionally biased toward low complexity; the sequence is MSVNADSQHSNNSSHQ. The interval 1 to 22 is disordered; that stretch reads MSVNADSQHSNNSSHQASEKAF. Position 277 is an N6-(pyridoxal phosphate)lysine (Lys277).

This sequence belongs to the class-III pyridoxal-phosphate-dependent aminotransferase family. HemL subfamily. In terms of assembly, homodimer. Pyridoxal 5'-phosphate serves as cofactor.

Its subcellular location is the cytoplasm. The catalysed reaction is (S)-4-amino-5-oxopentanoate = 5-aminolevulinate. The protein operates within porphyrin-containing compound metabolism; protoporphyrin-IX biosynthesis; 5-aminolevulinate from L-glutamyl-tRNA(Glu): step 2/2. In Corynebacterium jeikeium (strain K411), this protein is Glutamate-1-semialdehyde 2,1-aminomutase.